A 243-amino-acid chain; its full sequence is Glucosamine-6-phosphate deaminase (243 aa).

Residue Asp-67 is the Proton acceptor; for enolization step of the active site. The active-site For ring-opening step is the Asn-137. The active-site Proton acceptor; for ring-opening step is His-139. Glu-144 acts as the For ring-opening step in catalysis.

This sequence belongs to the glucosamine/galactosamine-6-phosphate isomerase family. NagB subfamily.

It catalyses the reaction alpha-D-glucosamine 6-phosphate + H2O = beta-D-fructose 6-phosphate + NH4(+). The protein operates within amino-sugar metabolism; N-acetylneuraminate degradation; D-fructose 6-phosphate from N-acetylneuraminate: step 5/5. Functionally, catalyzes the reversible isomerization-deamination of glucosamine 6-phosphate (GlcN6P) to form fructose 6-phosphate (Fru6P) and ammonium ion. In Staphylococcus epidermidis (strain ATCC 12228 / FDA PCI 1200), this protein is Glucosamine-6-phosphate deaminase.